A 508-amino-acid polypeptide reads, in one-letter code: ATP synthase subunit alpha, chloroplastic (508 aa).

G171–T178 serves as a coordination point for ATP.

This sequence belongs to the ATPase alpha/beta chains family. As to quaternary structure, F-type ATPases have 2 components, CF(1) - the catalytic core - and CF(0) - the membrane proton channel. CF(1) has five subunits: alpha(3), beta(3), gamma(1), delta(1), epsilon(1). CF(0) has four main subunits: a, b, b' and c.

Its subcellular location is the plastid. The protein resides in the chloroplast thylakoid membrane. The catalysed reaction is ATP + H2O + 4 H(+)(in) = ADP + phosphate + 5 H(+)(out). Its function is as follows. Produces ATP from ADP in the presence of a proton gradient across the membrane. The alpha chain is a regulatory subunit. The protein is ATP synthase subunit alpha, chloroplastic of Gnetum parvifolium (Small-leaved jointfir).